The sequence spans 353 residues: Ferredoxin--NADP reductase 1 (353 aa).

8 residues coordinate FAD: Thr14, Asp33, Gln41, Tyr46, Ala86, Phe121, Asp289, and Thr330.

The protein belongs to the ferredoxin--NADP reductase type 2 family. As to quaternary structure, homodimer. It depends on FAD as a cofactor.

The catalysed reaction is 2 reduced [2Fe-2S]-[ferredoxin] + NADP(+) + H(+) = 2 oxidized [2Fe-2S]-[ferredoxin] + NADPH. The protein is Ferredoxin--NADP reductase 1 of Christiangramia forsetii (strain DSM 17595 / CGMCC 1.15422 / KT0803) (Gramella forsetii).